We begin with the raw amino-acid sequence, 226 residues long: Orotate phosphoribosyltransferase (226 aa).

A 5-phospho-alpha-D-ribose 1-diphosphate-binding site is contributed by K30. 38–39 lines the orotate pocket; that stretch reads FF. 5-phospho-alpha-D-ribose 1-diphosphate-binding positions include 76 to 77, R106, K107, K110, H112, and 132 to 140; these read YK and DDVMTAGTA. The orotate site is built by T136 and R164.

This sequence belongs to the purine/pyrimidine phosphoribosyltransferase family. PyrE subfamily. As to quaternary structure, homodimer.

The enzyme catalyses orotidine 5'-phosphate + diphosphate = orotate + 5-phospho-alpha-D-ribose 1-diphosphate. Its pathway is pyrimidine metabolism; UMP biosynthesis via de novo pathway; UMP from orotate: step 1/2. Its function is as follows. Catalyzes the transfer of a ribosyl phosphate group from 5-phosphoribose 1-diphosphate to orotate, leading to the formation of orotidine monophosphate (OMP). The protein is Orotate phosphoribosyltransferase (URA5) of Kluyveromyces lactis (strain ATCC 8585 / CBS 2359 / DSM 70799 / NBRC 1267 / NRRL Y-1140 / WM37) (Yeast).